We begin with the raw amino-acid sequence, 320 residues long: Annexin A5 (320 aa).

Position 2 is an N-acetylalanine (A2). Annexin repeat units lie at residues 15 to 86 (FDER…ALMK), 87 to 158 (PSRL…VLLQ), 170 to 242 (AQVE…AVVK), and 246 to 317 (SIPA…LLCG). A Glycyl lysine isopeptide (Lys-Gly) (interchain with G-Cter in SUMO1); alternate cross-link involves residue K29. A Glycyl lysine isopeptide (Lys-Gly) (interchain with G-Cter in SUMO2); alternate cross-link involves residue K29. Phosphoserine is present on S37. An N6-acetyllysine mark is found at K70, K76, K79, K97, and K101. An N6-succinyllysine modification is found at K290. The [IL]-x-C-x-x-[DE] motif signature appears at 314-320 (LLCGGED).

This sequence belongs to the annexin family. As to quaternary structure, monomer. Binds ATRX and EIF5B. In terms of processing, S-nitrosylation is induced by interferon-gamma and oxidatively-modified low-densitity lipoprotein (LDL(ox)) possibly implicating the iNOS-S100A8/9 transnitrosylase complex.

In terms of biological role, this protein is an anticoagulant protein that acts as an indirect inhibitor of the thromboplastin-specific complex, which is involved in the blood coagulation cascade. The protein is Annexin A5 (ANXA5) of Macaca fascicularis (Crab-eating macaque).